The sequence spans 230 residues: 2,3-bisphosphoglycerate-dependent phosphoglycerate mutase (230 aa).

Residues 8–15 (RHGQSEWN), 21–22 (TG), arginine 60, 87–90 (ERHY), lysine 98, 114–115 (RR), and 183–184 (GN) each bind substrate. The active-site Tele-phosphohistidine intermediate is histidine 9. Residue glutamate 87 is the Proton donor/acceptor of the active site.

This sequence belongs to the phosphoglycerate mutase family. BPG-dependent PGAM subfamily.

It carries out the reaction (2R)-2-phosphoglycerate = (2R)-3-phosphoglycerate. It functions in the pathway carbohydrate degradation; glycolysis; pyruvate from D-glyceraldehyde 3-phosphate: step 3/5. Its function is as follows. Catalyzes the interconversion of 2-phosphoglycerate and 3-phosphoglycerate. This Lactobacillus acidophilus (strain ATCC 700396 / NCK56 / N2 / NCFM) protein is 2,3-bisphosphoglycerate-dependent phosphoglycerate mutase.